Reading from the N-terminus, the 259-residue chain is Dihydroorotate dehydrogenase B (NAD(+)), electron transfer subunit (259 aa).

An FAD-binding FR-type domain is found at 2-102 (MQKQNMIVVN…LGPLGHGFPL (101 aa)). Residues 53–56 (RPIS), 70–72 (LYR), and 77–78 (GT) contribute to the FAD site. [2Fe-2S] cluster contacts are provided by Cys-221, Cys-226, Cys-229, and Cys-246.

Belongs to the PyrK family. In terms of assembly, heterotetramer of 2 PyrK and 2 PyrD type B subunits. Requires [2Fe-2S] cluster as cofactor. FAD is required as a cofactor.

It participates in pyrimidine metabolism; UMP biosynthesis via de novo pathway; orotate from (S)-dihydroorotate (NAD(+) route): step 1/1. Functionally, responsible for channeling the electrons from the oxidation of dihydroorotate from the FMN redox center in the PyrD type B subunit to the ultimate electron acceptor NAD(+). In Bacillus cereus (strain B4264), this protein is Dihydroorotate dehydrogenase B (NAD(+)), electron transfer subunit.